Consider the following 528-residue polypeptide: Glutamyl-tRNA(Gln) amidotransferase subunit B, mitochondrial (528 aa).

This sequence belongs to the GatB/GatE family. GatB subfamily. In terms of assembly, subunit of the heterotrimeric GatFAB amidotransferase (AdT) complex, composed of A, B and F subunits.

The protein localises to the mitochondrion. The catalysed reaction is L-glutamyl-tRNA(Gln) + L-glutamine + ATP + H2O = L-glutaminyl-tRNA(Gln) + L-glutamate + ADP + phosphate + H(+). Allows the formation of correctly charged Gln-tRNA(Gln) through the transamidation of misacylated Glu-tRNA(Gln) in the mitochondria. The reaction takes place in the presence of glutamine and ATP through an activated gamma-phospho-Glu-tRNA(Gln). The sequence is that of Glutamyl-tRNA(Gln) amidotransferase subunit B, mitochondrial from Clavispora lusitaniae (strain ATCC 42720) (Yeast).